Reading from the N-terminus, the 876-residue chain is Valine--tRNA ligase (876 aa).

The short motif at P44–H54 is the 'HIGH' region element. The 'KMSKS' region motif lies at K520–S524. K523 is a binding site for ATP. A coiled-coil region spans residues L805 to A876.

The protein belongs to the class-I aminoacyl-tRNA synthetase family. ValS type 1 subfamily. As to quaternary structure, monomer.

It is found in the cytoplasm. It carries out the reaction tRNA(Val) + L-valine + ATP = L-valyl-tRNA(Val) + AMP + diphosphate. Its function is as follows. Catalyzes the attachment of valine to tRNA(Val). As ValRS can inadvertently accommodate and process structurally similar amino acids such as threonine, to avoid such errors, it has a 'posttransfer' editing activity that hydrolyzes mischarged Thr-tRNA(Val) in a tRNA-dependent manner. This chain is Valine--tRNA ligase, found in Staphylococcus aureus (strain Mu3 / ATCC 700698).